Here is a 420-residue protein sequence, read N- to C-terminus: 3-phosphoshikimate 1-carboxyvinyltransferase (420 aa).

Lys-20, Ser-21, and Arg-25 together coordinate 3-phosphoshikimate. Position 20 (Lys-20) interacts with phosphoenolpyruvate. Phosphoenolpyruvate contacts are provided by Gly-90 and Arg-118. Residues Ser-159, Ser-160, Gln-161, Ser-187, Asp-303, and Lys-330 each coordinate 3-phosphoshikimate. Position 161 (Gln-161) interacts with phosphoenolpyruvate. Asp-303 functions as the Proton acceptor in the catalytic mechanism. Residues Arg-334, Arg-376, and Lys-402 each contribute to the phosphoenolpyruvate site.

It belongs to the EPSP synthase family. In terms of assembly, monomer.

Its subcellular location is the cytoplasm. The catalysed reaction is 3-phosphoshikimate + phosphoenolpyruvate = 5-O-(1-carboxyvinyl)-3-phosphoshikimate + phosphate. Its pathway is metabolic intermediate biosynthesis; chorismate biosynthesis; chorismate from D-erythrose 4-phosphate and phosphoenolpyruvate: step 6/7. Catalyzes the transfer of the enolpyruvyl moiety of phosphoenolpyruvate (PEP) to the 5-hydroxyl of shikimate-3-phosphate (S3P) to produce enolpyruvyl shikimate-3-phosphate and inorganic phosphate. This is 3-phosphoshikimate 1-carboxyvinyltransferase from Brachyspira hyodysenteriae (strain ATCC 49526 / WA1).